Here is a 148-residue protein sequence, read N- to C-terminus: Probable histone H2A.1 (148 aa).

Basic residues predominate over residues 1–23; that stretch reads MDASTKTKKGAGGRKGGPRKKSV. 2 disordered regions span residues 1–28 and 127–148; these read MDAS…RSTR and KNEK…PKKA. Over residues 131-142 the composition is skewed to low complexity; sequence AATTTKSPSKAT. 2 consecutive short sequence motifs (SPKK motif) follow at residues 137 to 140 and 144 to 147; these read SPSK and SPKK.

It belongs to the histone H2A family. The nucleosome is a histone octamer containing two molecules each of H2A, H2B, H3 and H4 assembled in one H3-H4 heterotetramer and two H2A-H2B heterodimers. The octamer wraps approximately 147 bp of DNA.

It localises to the nucleus. It is found in the chromosome. Core component of nucleosome. Nucleosomes wrap and compact DNA into chromatin, limiting DNA accessibility to the cellular machineries which require DNA as a template. Histones thereby play a central role in transcription regulation, DNA repair, DNA replication and chromosomal stability. DNA accessibility is regulated via a complex set of post-translational modifications of histones, also called histone code, and nucleosome remodeling. The protein is Probable histone H2A.1 of Medicago truncatula (Barrel medic).